The following is a 229-amino-acid chain: Cytochrome c oxidase subunit 2 (229 aa).

The Mitochondrial intermembrane portion of the chain corresponds to 1-14 (MANPSQFGFQDASS). A helical membrane pass occupies residues 15–45 (PIMEELVEFHDHALMVALAICSLVLYLLALM). Over 46 to 58 (LVEKLSSNTVDAQ) the chain is Mitochondrial matrix. A helical membrane pass occupies residues 59–86 (EVELIWTILPAIVLILLALPSLQILYMM). Topologically, residues 87-229 (DEIDEPDLTL…SWSSLLSTDS (143 aa)) are mitochondrial intermembrane. Residues His-160, Cys-195, Glu-197, Cys-199, His-203, and Met-206 each contribute to the Cu cation site. Position 197 (Glu-197) interacts with Mg(2+).

It belongs to the cytochrome c oxidase subunit 2 family. Component of the cytochrome c oxidase (complex IV, CIV), a multisubunit enzyme composed of 14 subunits. The complex is composed of a catalytic core of 3 subunits MT-CO1, MT-CO2 and MT-CO3, encoded in the mitochondrial DNA, and 11 supernumerary subunits COX4I, COX5A, COX5B, COX6A, COX6B, COX6C, COX7A, COX7B, COX7C, COX8 and NDUFA4, which are encoded in the nuclear genome. The complex exists as a monomer or a dimer and forms supercomplexes (SCs) in the inner mitochondrial membrane with NADH-ubiquinone oxidoreductase (complex I, CI) and ubiquinol-cytochrome c oxidoreductase (cytochrome b-c1 complex, complex III, CIII), resulting in different assemblies (supercomplex SCI(1)III(2)IV(1) and megacomplex MCI(2)III(2)IV(2)). Found in a complex with TMEM177, COA6, COX18, COX20, SCO1 and SCO2. Interacts with TMEM177 in a COX20-dependent manner. Interacts with COX20. Interacts with COX16. Requires Cu cation as cofactor.

The protein localises to the mitochondrion inner membrane. It catalyses the reaction 4 Fe(II)-[cytochrome c] + O2 + 8 H(+)(in) = 4 Fe(III)-[cytochrome c] + 2 H2O + 4 H(+)(out). Functionally, component of the cytochrome c oxidase, the last enzyme in the mitochondrial electron transport chain which drives oxidative phosphorylation. The respiratory chain contains 3 multisubunit complexes succinate dehydrogenase (complex II, CII), ubiquinol-cytochrome c oxidoreductase (cytochrome b-c1 complex, complex III, CIII) and cytochrome c oxidase (complex IV, CIV), that cooperate to transfer electrons derived from NADH and succinate to molecular oxygen, creating an electrochemical gradient over the inner membrane that drives transmembrane transport and the ATP synthase. Cytochrome c oxidase is the component of the respiratory chain that catalyzes the reduction of oxygen to water. Electrons originating from reduced cytochrome c in the intermembrane space (IMS) are transferred via the dinuclear copper A center (CU(A)) of subunit 2 and heme A of subunit 1 to the active site in subunit 1, a binuclear center (BNC) formed by heme A3 and copper B (CU(B)). The BNC reduces molecular oxygen to 2 water molecules using 4 electrons from cytochrome c in the IMS and 4 protons from the mitochondrial matrix. The protein is Cytochrome c oxidase subunit 2 (MT-CO2) of Struthio camelus (Common ostrich).